The sequence spans 365 residues: Peptidyl-prolyl cis-trans isomerase FKBP42 (365 aa).

Over residues 1 to 15 the composition is skewed to basic and acidic residues; sequence MDESLEHQTQTHDQE. Residues 1–44 are disordered; that stretch reads MDESLEHQTQTHDQESEIVTEGSAVVHSEPSQEGNVPPKVDSEA. Residues 1-163 are interaction with MDR1/PGP1; that stretch reads MDESLEHQTQ…EVIGFDETKE (163 aa). Residues 67–159 enclose the PPIase FKBP-type domain; that stretch reads YSTCFLHYRA…LYEVEVIGFD (93 aa). Positions 163 to 337 are interaction with MRP1; that stretch reads EGKARSDMTV…GKDEGGAKSK (175 aa). TPR repeat units lie at residues 179-212, 230-263, and 264-297; these read ADRR…MGDD, NPCH…EEKN, and PKAL…APDD. The interval 310–326 is calmodulin-binding; the sequence is QEKALYQKQKEMYKGIF. Residues 338-357 traverse the membrane as a helical; Anchor for type IV membrane protein segment; it reads SLFWLIVLWQWFVSLFSRIF.

It belongs to the FKBP-type PPIase family. Interacts with calmodulin (CaM), MRP1, MRP2, MDR1/PGP1, MDR11/PGP19 and SHD/HSP90. Interacts with 1-naphthylphthalamic acid (NPA).

The protein resides in the cell membrane. The protein localises to the vacuole membrane. It is found in the endoplasmic reticulum. The enzyme catalyses [protein]-peptidylproline (omega=180) = [protein]-peptidylproline (omega=0). PPIases accelerate the folding of proteins. It catalyzes the cis-trans isomerization of proline imidic peptide bonds in oligopeptides. Modulates the uptake of MRP substrates into the vacuole; reduces metolachlor-GS (MOC-GS) and enhances 17-beta-estradiol 17-(beta-D-glucuronide) (E(2)17betaG) uptake. Regulates cell elongation and orientation. Functions as a positive regulator of PGP1-mediated auxin transport. Confers drug modulation of PGP1 efflux activity as interaction with NPA or flavonol quercetin prevents its physical and functional interaction with PGP1. Required for the proper localization of auxin-related ABCB transporters. Plays a role in brassinosteroid (BR) signaling pathway. Required for seed development by promoting stamen elongation and, to a lesser extent, anther dehiscence and pollen maturation, probably as a chaperone helping ABCB1 and ABCB19 auxin transporters localization and activation. Involved in auxin signaling in nectaries to promote starch accumulation to attract visiting pollinators. This chain is Peptidyl-prolyl cis-trans isomerase FKBP42, found in Arabidopsis thaliana (Mouse-ear cress).